The primary structure comprises 306 residues: Mycothiol acetyltransferase (306 aa).

N-acetyltransferase domains follow at residues Glu5–Ala157 and Ile159–Leu306. Glu36 serves as a coordination point for 1D-myo-inositol 2-(L-cysteinylamino)-2-deoxy-alpha-D-glucopyranoside. Met82–Val84 serves as a coordination point for acetyl-CoA. 1D-myo-inositol 2-(L-cysteinylamino)-2-deoxy-alpha-D-glucopyranoside is bound by residues Asp186, Lys227, and Glu238. Leu242–Val244 contributes to the acetyl-CoA binding site. Tyr276 contributes to the 1D-myo-inositol 2-(L-cysteinylamino)-2-deoxy-alpha-D-glucopyranoside binding site. Position 281–286 (Asn281–Arg286) interacts with acetyl-CoA.

It belongs to the acetyltransferase family. MshD subfamily. In terms of assembly, monomer.

It catalyses the reaction 1D-myo-inositol 2-(L-cysteinylamino)-2-deoxy-alpha-D-glucopyranoside + acetyl-CoA = mycothiol + CoA + H(+). In terms of biological role, catalyzes the transfer of acetyl from acetyl-CoA to desacetylmycothiol (Cys-GlcN-Ins) to form mycothiol. The protein is Mycothiol acetyltransferase of Stackebrandtia nassauensis (strain DSM 44728 / CIP 108903 / NRRL B-16338 / NBRC 102104 / LLR-40K-21).